Consider the following 202-residue polypeptide: LexA repressor (202 aa).

A DNA-binding region (H-T-H motif) is located at residues 27-47; that stretch reads RAEIAAELGFRSANAAEEHLR. Catalysis depends on for autocatalytic cleavage activity residues S119 and K156.

The protein belongs to the peptidase S24 family. In terms of assembly, homodimer.

It carries out the reaction Hydrolysis of Ala-|-Gly bond in repressor LexA.. Its function is as follows. Represses a number of genes involved in the response to DNA damage (SOS response), including recA and lexA. In the presence of single-stranded DNA, RecA interacts with LexA causing an autocatalytic cleavage which disrupts the DNA-binding part of LexA, leading to derepression of the SOS regulon and eventually DNA repair. In Marinobacter nauticus (strain ATCC 700491 / DSM 11845 / VT8) (Marinobacter aquaeolei), this protein is LexA repressor.